The following is a 380-amino-acid chain: Cytochrome b (380 aa).

4 helical membrane-spanning segments follow: residues 34–54 (FGSL…FLAM), 78–99 (WLLR…YFHI), 114–134 (WYTG…GYIL), and 179–199 (FFTL…IHLL). The heme b site is built by histidine 84 and histidine 98. Heme b-binding residues include histidine 183 and histidine 197. Histidine 202 is a binding site for a ubiquinone. 4 consecutive transmembrane segments (helical) span residues 227–247 (YKDL…TLFL), 289–309 (LGGV…PTLH), 321–341 (FTQI…WIGA), and 348–368 (FIMI…LLIP).

This sequence belongs to the cytochrome b family. As to quaternary structure, the cytochrome bc1 complex contains 3 respiratory subunits (MT-CYB, CYC1 and UQCRFS1), 2 core proteins (UQCRC1 and UQCRC2) and probably 6 low-molecular weight proteins. The cofactor is heme b.

It is found in the mitochondrion inner membrane. Component of the ubiquinol-cytochrome c reductase complex (complex III or cytochrome b-c1 complex) that is part of the mitochondrial respiratory chain. The b-c1 complex mediates electron transfer from ubiquinol to cytochrome c. Contributes to the generation of a proton gradient across the mitochondrial membrane that is then used for ATP synthesis. The protein is Cytochrome b (MT-CYB) of Pelomedusa subrufa (African side-necked turtle).